Consider the following 585-residue polypeptide: Protein FAM13C (585 aa).

3 disordered regions span residues 26–45 (PVSLHEDQTDCSSLRDENNK), 83–138 (SMGN…NAFK), and 171–216 (EAAQ…APED). 2 stretches are compositionally biased toward basic and acidic residues: residues 27 to 45 (VSLHEDQTDCSSLRDENNK) and 99 to 112 (ESGRSHGESQETEH). Serine 131 is modified (phosphoserine). Serine 238 bears the Phosphoserine mark. 3 disordered regions span residues 250 to 282 (FNLDPESAPSPPSTQQFMMPRSSSRCSCGDGKE), 349 to 391 (EEQG…EETP), and 441 to 477 (IPTIQEEEDSDEDRPQGSQQPSLADPASHLPVGDHLT). Residues 262–275 (STQQFMMPRSSSRC) show a composition bias toward polar residues. Phosphoserine occurs at positions 385 and 386.

The protein belongs to the FAM13 family.

The chain is Protein FAM13C (FAM13C) from Homo sapiens (Human).